The primary structure comprises 250 residues: Uridylate kinase (250 aa).

17 to 20 (KLSG) contributes to the ATP binding site. Gly-59 is a UMP binding site. The ATP site is built by Gly-60 and Arg-64. Residues Asp-79 and 140 to 147 (TGNPYFTT) contribute to the UMP site. Residues Thr-167, Tyr-173, and Asp-176 each contribute to the ATP site.

Belongs to the UMP kinase family. In terms of assembly, homohexamer.

It is found in the cytoplasm. It carries out the reaction UMP + ATP = UDP + ADP. It functions in the pathway pyrimidine metabolism; CTP biosynthesis via de novo pathway; UDP from UMP (UMPK route): step 1/1. With respect to regulation, inhibited by UTP. Its function is as follows. Catalyzes the reversible phosphorylation of UMP to UDP. This chain is Uridylate kinase, found in Myxococcus xanthus (strain DK1622).